A 444-amino-acid chain; its full sequence is Acyl-CoA 6-desaturase (444 aa).

Topologically, residues 1-122 (MGKGGNQDEG…FRALRKTAED (122 aa)) are cytoplasmic. In terms of domain architecture, Cytochrome b5 heme-binding spans 18–95 (MPTFRWEEIQ…MKPLLIGELA (78 aa)). A helical transmembrane segment spans residues 123–143 (MNLFKSNQLFFLLHLAHIIAM). Residues 144 to 147 (ESIA) are Lumenal-facing. The helical transmembrane segment at 148–168 (WFTLFYFGNGWIPTIITAFVL) threads the bilayer. At 169 to 264 (ATSQAQAGWL…KYLPYNHQHE (96 aa)) the chain is on the cytoplasmic side. Positions 180–184 (HDYGH) match the Histidine box-1 motif. The Histidine box-2 motif lies at 217–221 (HFQHH). Residues 265–285 (YFFLIGPPLLIPLYFQYQIIM) form a helical membrane-spanning segment. Over 286 to 305 (TMIVRKYWADLAWAISYYTR) the chain is Lumenal. Residues 306 to 326 (FFITYIPFYGVLGSILFLNFI) traverse the membrane as a helical segment. Residues 327 to 444 (RFLESHWFVW…QLWLDAYLHK (118 aa)) lie on the Cytoplasmic side of the membrane. The Histidine box-3 motif lies at 382–386 (QIEHH).

It belongs to the fatty acid desaturase type 1 family.

The protein resides in the endoplasmic reticulum membrane. It carries out the reaction (9Z,12Z)-octadecadienoyl-CoA + 2 Fe(II)-[cytochrome b5] + O2 + 2 H(+) = (6Z,9Z,12Z)-octadecatrienoyl-CoA + 2 Fe(III)-[cytochrome b5] + 2 H2O. It catalyses the reaction (9Z,12Z,15Z)-octadecatrienoyl-CoA + 2 Fe(II)-[cytochrome b5] + O2 + 2 H(+) = (6Z,9Z,12Z,15Z)-octadecatetraenoyl-CoA + 2 Fe(III)-[cytochrome b5] + 2 H2O. The catalysed reaction is (9Z,12Z,15Z,18Z,21Z)-tetracosapentaenoyl-CoA + 2 Fe(II)-[cytochrome b5] + O2 + 2 H(+) = (6Z,9Z,12Z,15Z,18Z,21Z)-tetracosahexaenoyl-CoA + 2 Fe(III)-[cytochrome b5] + 2 H2O. The enzyme catalyses (11E)-octadecenoyl-CoA + 2 Fe(II)-[cytochrome b5] + O2 + 2 H(+) = (6Z,11E)-octadecadienoyl-CoA + 2 Fe(III)-[cytochrome b5] + 2 H2O. It carries out the reaction (11Z,14Z)-eicosadienoyl-CoA + 2 Fe(II)-[cytochrome b5] + O2 + 2 H(+) = (8Z,11Z,14Z)-eicosatrienoyl-CoA + 2 Fe(III)-[cytochrome b5] + 2 H2O. It catalyses the reaction (11Z,14Z,17Z)-eicosatrienoyl-CoA + 2 Fe(II)-[cytochrome b5] + O2 + 2 H(+) = (8Z,11Z,14Z,17Z)-eicosatetraenoyl-CoA + 2 Fe(III)-[cytochrome b5] + 2 H2O. It functions in the pathway lipid metabolism; polyunsaturated fatty acid biosynthesis. Its function is as follows. Involved in the biosynthesis of highly unsaturated fatty acids (HUFA) from the essential polyunsaturated fatty acids (PUFA) linoleic acid (LA) (18:2n-6) and alpha-linolenic acid (ALA) (18:3n-3) precursors, acting as a fatty acyl-coenzyme A (CoA) desaturase that introduces a cis double bond at carbon 6 of the fatty acyl chain. Catalyzes the first and rate limiting step in this pathway which is the desaturation of LA (18:2n-6) and ALA (18:3n-3) into gamma-linoleate (GLA) (18:3n-6) and stearidonate (18:4n-3), respectively. Subsequently, in the biosynthetic pathway of HUFA n-3 series, it desaturates tetracosapentaenoate (24:5n-3) to tetracosahexaenoate (24:6n-3), which is then converted to docosahexaenoate (DHA)(22:6n-3), an important lipid for nervous system function. It can also desaturate (11E)-octadecenoate (trans-vaccenoate, a metabolite in the biohydrogenation pathway of LA and the predominant trans fatty acid in cow milk) at carbon 6 generating (6Z,11E)-octadecadienoate. In addition to Delta-6 activity, this enzyme exhibits Delta-8 activity with slight biases toward n-3 fatty acyl-CoA substrates. The polypeptide is Acyl-CoA 6-desaturase (FADS2) (Bos taurus (Bovine)).